The primary structure comprises 181 residues: Terminase small subunit (181 aa).

The winged helix-turn-helix (wHTH) stretch occupies residues 1–29 (MEVNKKQLADIFGASIRTIQNWQEQGMPV). 31–36 (RGGGKG) lines the ATP pocket. Residues 52-109 (ERDAEIENEKLRREVEELRQASEADLQPGTIEYERHRLTRAQADAQELKNARDSAEVV) are a coiled coil. The self-assembly stretch occupies residues 110 to 140 (ETAFCTFVLSRIAGEIASILDGLPLSVQRRF). The binding to terminase large subunit stretch occupies residues 141-180 (PELENRHVDFLKRDIIKAMNKAAALDELIPGLLSEYIEQS).

The protein belongs to the terminase small subunit family. In terms of assembly, homodimer. Heterotrimer of two small and one large terminase subunits. The catalytically competent terminase is composed of a tetramer of heterotrimers. The tetramer forms a ring structure large enough to encircle duplex DNA. Host IHFA/IHFB induces bending of viral DNA to facilitate the assembly of the terminase tetramer of heterotrimers. Interacts (via C-terminus) with the terminase large subunit (via N-terminus).

It localises to the host cytoplasm. It catalyses the reaction ATP + H2O = ADP + phosphate + H(+). In terms of biological role, the small subunit is responsible for the binding to multiple recognition elements within the packaging initiation site cos. The terminase lies at a unique vertex of the procapsid and is composed of two subunits, a small terminase subunit involved in viral DNA recognition (binding to packaging sequence cos), and a large terminase subunit possessing endonucleolytic and ATPase activities (DNA maturation and packaging). The terminase binds, cooperatively with the host factor IHFA/IHFB, to the cos site at the junction of adjacent viral genomes in the concatemeric DNA. The endonuclease activity of the large subunit cleave the viral DNA generating 5'overhangs of 12 bp in length. The terminase remains bound to the left end of the genome to be packaged, forming a stable DNA-terminase complex. In a reaction facilitated by the viral assembly catalyst gpFI, the DNA-terminase complex binds to the portal of the procapsid and the terminase packages the viral DNA into the procapsid until the next cos site on the concatemer reaches the complex ('unit length' packaging). The downstream cos site is then cut generating the mature right end of the genome, the heterotrimer undocks from the DNA-filled head and remains bound to the left end of concatemer's next genome. The polypeptide is Terminase small subunit (Nu1) (Escherichia phage lambda (Bacteriophage lambda)).